Here is a 369-residue protein sequence, read N- to C-terminus: Uroporphyrinogen decarboxylase (369 aa).

Arginine 39, alanine 41, arginine 43, arginine 52, aspartate 88, tyrosine 166, serine 221, and histidine 341 together coordinate coproporphyrinogen I. Coproporphyrinogen III is bound by residues arginine 39, alanine 41, and arginine 43. Coproporphyrinogen III is bound by residues aspartate 88, tyrosine 166, serine 221, and histidine 341.

Belongs to the uroporphyrinogen decarboxylase family. In terms of assembly, homodimer.

The protein resides in the cytoplasm. It is found in the cytosol. The enzyme catalyses uroporphyrinogen III + 4 H(+) = coproporphyrinogen III + 4 CO2. It catalyses the reaction uroporphyrinogen I + 4 H(+) = coproporphyrinogen I + 4 CO2. Its pathway is porphyrin-containing compound metabolism; protoporphyrin-IX biosynthesis; coproporphyrinogen-III from 5-aminolevulinate: step 4/4. In terms of biological role, catalyzes the sequential decarboxylation of the four acetate side chains of uroporphyrinogen to form coproporphyrinogen and participates in the fifth step in the heme biosynthetic pathway. Isomer I or isomer III of uroporphyrinogen may serve as substrate, but only coproporphyrinogen III can ultimately be converted to heme. In vitro also decarboxylates pentacarboxylate porphyrinogen I. This is Uroporphyrinogen decarboxylase from Danio rerio (Zebrafish).